A 135-amino-acid chain; its full sequence is Large ribosomal subunit protein eL32 (135 aa).

The protein belongs to the eukaryotic ribosomal protein eL32 family.

In Methanococcus maripaludis (strain DSM 14266 / JCM 13030 / NBRC 101832 / S2 / LL), this protein is Large ribosomal subunit protein eL32 (rpl32e).